A 1257-amino-acid chain; its full sequence is Protein flightless-1 homolog (1257 aa).

16 LRR repeats span residues 6-31 (LQFVKGIDFSGNDFSGDRFPHDVEQM), 32-54 (TQMTWLKLNDSKLEQVPDELSRC), 56-77 (NLEHLQMAHNQLISVHGELSDL), 78-102 (PRLRSVIVRDNNLKTAGIPTDIFRM), 103-126 (KDLTIIDLSRNQLREVPTNLEYAK), 128-148 (SIVLNLSYNNIETIPNSVCAN), 149-172 (LIDLLFLDLSNNKLDMLPPQIRRL), 174-195 (MLQSLKLSNNPLNHFQLKQLPS), 197-221 (TSLSVLHMSNTNRTLDNIPPTLDDM), 222-244 (HNLRDVDFSENNLPIVPEALFKL), 246-267 (NLRKLNLSGNKIEKLNMTEGEW), 268-290 (ENLETLNMSHNQLTVLPDCVVKL), 292-315 (RLTKLYAANNQLTFEGIPSGIGKL), 316-338 (IQLTVLHLSYNKLELVPEGISRC), 339-361 (VKLQKLKLDHNRLITLPEGIHLL), and 363-384 (DLKVLDLHENENLVMPPKPNDA). 4 Gelsolin-like repeats span residues 523–600 (MDEA…EEFL), 640–714 (AVEM…PEFW), 759–832 (ELPK…MMFR), and 1168–1243 (EKTV…CRFR).

This sequence belongs to the villin/gelsolin family.

In terms of biological role, may play a key role in embryonic cellularization by interacting with both the cytoskeleton and other cellular components. The protein is Protein flightless-1 homolog (fli-1) of Caenorhabditis elegans.